A 529-amino-acid chain; its full sequence is Bifunctional purine biosynthesis protein PurH (529 aa).

The region spanning 2 to 148 (QQLRPIHRAL…KNHKDVAIVV (147 aa)) is the MGS-like domain.

It belongs to the PurH family.

It catalyses the reaction (6R)-10-formyltetrahydrofolate + 5-amino-1-(5-phospho-beta-D-ribosyl)imidazole-4-carboxamide = 5-formamido-1-(5-phospho-D-ribosyl)imidazole-4-carboxamide + (6S)-5,6,7,8-tetrahydrofolate. It carries out the reaction IMP + H2O = 5-formamido-1-(5-phospho-D-ribosyl)imidazole-4-carboxamide. It functions in the pathway purine metabolism; IMP biosynthesis via de novo pathway; 5-formamido-1-(5-phospho-D-ribosyl)imidazole-4-carboxamide from 5-amino-1-(5-phospho-D-ribosyl)imidazole-4-carboxamide (10-formyl THF route): step 1/1. It participates in purine metabolism; IMP biosynthesis via de novo pathway; IMP from 5-formamido-1-(5-phospho-D-ribosyl)imidazole-4-carboxamide: step 1/1. The sequence is that of Bifunctional purine biosynthesis protein PurH from Photorhabdus laumondii subsp. laumondii (strain DSM 15139 / CIP 105565 / TT01) (Photorhabdus luminescens subsp. laumondii).